The following is a 345-amino-acid chain: Dihydroorotase (345 aa).

The Zn(2+) site is built by histidine 13 and histidine 15. Residues 15-17 and asparagine 41 contribute to the substrate site; that span reads HLR. Zn(2+)-binding residues include lysine 99, histidine 136, and histidine 174. Lysine 99 carries the N6-carboxylysine modification. Histidine 136 is a binding site for substrate. Position 219 (leucine 219) interacts with substrate. Aspartate 247 contributes to the Zn(2+) binding site. The active site involves aspartate 247. Substrate-binding residues include histidine 251 and alanine 263.

The protein belongs to the metallo-dependent hydrolases superfamily. DHOase family. Class II DHOase subfamily. As to quaternary structure, homodimer. Requires Zn(2+) as cofactor.

It catalyses the reaction (S)-dihydroorotate + H2O = N-carbamoyl-L-aspartate + H(+). It functions in the pathway pyrimidine metabolism; UMP biosynthesis via de novo pathway; (S)-dihydroorotate from bicarbonate: step 3/3. Catalyzes the reversible cyclization of carbamoyl aspartate to dihydroorotate. The protein is Dihydroorotase of Agrobacterium fabrum (strain C58 / ATCC 33970) (Agrobacterium tumefaciens (strain C58)).